Reading from the N-terminus, the 954-residue chain is Glycine dehydrogenase (decarboxylating) (954 aa).

Lys-704 carries the post-translational modification N6-(pyridoxal phosphate)lysine.

Belongs to the GcvP family. As to quaternary structure, the glycine cleavage system is composed of four proteins: P, T, L and H. Pyridoxal 5'-phosphate is required as a cofactor.

It carries out the reaction N(6)-[(R)-lipoyl]-L-lysyl-[glycine-cleavage complex H protein] + glycine + H(+) = N(6)-[(R)-S(8)-aminomethyldihydrolipoyl]-L-lysyl-[glycine-cleavage complex H protein] + CO2. In terms of biological role, the glycine cleavage system catalyzes the degradation of glycine. The P protein binds the alpha-amino group of glycine through its pyridoxal phosphate cofactor; CO(2) is released and the remaining methylamine moiety is then transferred to the lipoamide cofactor of the H protein. This is Glycine dehydrogenase (decarboxylating) from Vibrio vulnificus (strain CMCP6).